Here is a 164-residue protein sequence, read N- to C-terminus: Peptidyl-prolyl cis-trans isomerase A (164 aa).

Met-1 carries the N-acetylmethionine modification. Residue Val-2 is modified to N-acetylvaline; in Peptidyl-prolyl cis-trans isomerase A, N-terminally processed. One can recognise a PPIase cyclophilin-type domain in the interval 7 to 163 (FFDIAVDGEP…KKITIANCGQ (157 aa)). Lys-28 carries the post-translational modification N6-acetyllysine; alternate. Residue Lys-28 forms a Glycyl lysine isopeptide (Lys-Gly) (interchain with G-Cter in SUMO2); alternate linkage. A Glycyl lysine isopeptide (Lys-Gly) (interchain with G-Cter in ubiquitin); alternate cross-link involves residue Lys-28. Residues Lys-44 and Lys-76 each carry the N6-acetyllysine modification. Ser-77 bears the Phosphoserine mark. Lys-82 bears the N6-acetyllysine; alternate mark. Residue Lys-82 forms a Glycyl lysine isopeptide (Lys-Gly) (interchain with G-Cter in SUMO2); alternate linkage. Phosphothreonine is present on Thr-93. Asn-108 carries N-linked (GlcNAc...) asparagine glycosylation. N6-acetyllysine occurs at positions 125 and 133.

Belongs to the cyclophilin-type PPIase family. PPIase A subfamily. As to quaternary structure, interacts with protein phosphatase PPP3CA/calcineurin A. Interacts with isoform 2 of BSG/CD147. Interacts with FOXO1; the interaction promotes FOXO1 dephosphorylation, nuclear accumulation and transcriptional activity. Interacts with integrin ITGA2B:ITGB3; the interaction is ROS and peptidyl-prolyl cis-trans isomerase (PPIase) activity-dependent and is increased in the presence of thrombin. Interacts with MAP3K5. Interacts with TARDBP; the interaction is dependent on the RNA-binding activity of TARDBP and the PPIase activity of PPIA/CYPA and the acetylation of PPIA/CYPA at Lys-125 favors the interaction. Interacts with HNRNPA1, HNRNPA2B1, HNRNPC, RBMX, HNRNPK and HNRNPM. Post-translationally, acetylation at Lys-125 markedly inhibits catalysis of cis to trans isomerization. PPIA acetylation also antagonizes the immunosuppressive effects of cyclosporine by inhibiting the sequential steps of cyclosporine binding and calcineurin inhibition. Acetylation at Lys-125 favors the interaction with TARDBP.

The protein resides in the cytoplasm. It localises to the secreted. It is found in the nucleus. The enzyme catalyses [protein]-peptidylproline (omega=180) = [protein]-peptidylproline (omega=0). Its activity is regulated as follows. Binds cyclosporin A (CsA). CsA mediates some of its effects via an inhibitory action on PPIase. Its function is as follows. Catalyzes the cis-trans isomerization of proline imidic peptide bonds in oligopeptides. Exerts a strong chemotactic effect on leukocytes partly through activation of one of its membrane receptors BSG/CD147, initiating a signaling cascade that culminates in MAPK/ERK activation. Activates endothelial cells (ECs) in a proinflammatory manner by stimulating activation of NF-kappa-B and ERK, JNK and p38 MAP-kinases and by inducing expression of adhesion molecules including SELE and VCAM1. Induces apoptosis in ECs by promoting the FOXO1-dependent expression of CCL2 and BCL2L11 which are involved in EC chemotaxis and apoptosis. In response to oxidative stress, initiates proapoptotic and antiapoptotic signaling in ECs via activation of NF-kappa-B and AKT1 and up-regulation of antiapoptotic protein BCL2. Negatively regulates MAP3K5/ASK1 kinase activity, autophosphorylation and oxidative stress-induced apoptosis mediated by MAP3K5/ASK1. Necessary for the assembly of TARDBP in heterogeneous nuclear ribonucleoprotein (hnRNP) complexes and regulates TARDBP binding to RNA UG repeats and TARDBP-dependent expression of HDAC6, ATG7 and VCP which are involved in clearance of protein aggregates. Plays an important role in platelet activation and aggregation. Regulates calcium mobilization and integrin ITGA2B:ITGB3 bidirectional signaling via increased ROS production as well as by facilitating the interaction between integrin and the cell cytoskeleton. Binds heparan sulfate glycosaminoglycans. This is Peptidyl-prolyl cis-trans isomerase A (PPIA) from Oryctolagus cuniculus (Rabbit).